A 175-amino-acid polypeptide reads, in one-letter code: Ribosome-binding factor A (175 aa).

The interval 129–175 (GAKPAGEADPYRDRGSADEPSDAGGLVIRTSDGLEAENTGDDYQAED) is disordered. Positions 162–175 (LEAENTGDDYQAED) are enriched in acidic residues.

Belongs to the RbfA family. As to quaternary structure, monomer. Binds 30S ribosomal subunits, but not 50S ribosomal subunits or 70S ribosomes.

Its subcellular location is the cytoplasm. Its function is as follows. One of several proteins that assist in the late maturation steps of the functional core of the 30S ribosomal subunit. Associates with free 30S ribosomal subunits (but not with 30S subunits that are part of 70S ribosomes or polysomes). Required for efficient processing of 16S rRNA. May interact with the 5'-terminal helix region of 16S rRNA. The chain is Ribosome-binding factor A from Mycobacterium marinum (strain ATCC BAA-535 / M).